A 648-amino-acid chain; its full sequence is Chaperone protein HtpG (648 aa).

The segment at 1–353 (MNARVEQLEF…AQDMSLNVSR (353 aa)) is a; substrate-binding. The b stretch occupies residues 354–567 (EILQQDRQIK…TFGITPALAR (214 aa)). A c region spans residues 568–648 (IYRATGQDVP…LLADRLTRTL (81 aa)).

It belongs to the heat shock protein 90 family. In terms of assembly, homodimer.

It is found in the cytoplasm. Its function is as follows. Molecular chaperone. Has ATPase activity. This chain is Chaperone protein HtpG, found in Mycobacterium ulcerans (strain Agy99).